Here is a 329-residue protein sequence, read N- to C-terminus: Vitamin B12 import system permease protein BtuC (329 aa).

9 consecutive transmembrane segments (helical) span residues 18 to 38 (WLLSLSLLVLLATLLSLCAGE), 64 to 84 (LAVLLVGASLALSGAVMQALF), 91 to 111 (PGLLGVSNGAGVGLIAAVLLG), 115 to 135 (LPGWSLGLCAIAGALTITLIL), 149 to 169 (LLAGVALGIICSALMTWAIYF), 191 to 208 (WQQSWLMTALIPVLIWIC), 243 to 263 (GWMVGVSVAMAGAIGFIGLVI), 277 to 297 (VLLPGCALAGAIALLLADVVA), and 305 to 325 (ELPIGVVTATLGAPIFIWLLL).

This sequence belongs to the binding-protein-dependent transport system permease family. FecCD subfamily. As to quaternary structure, the complex is composed of two ATP-binding proteins (BtuD), two transmembrane proteins (BtuC) and a solute-binding protein (BtuF).

It localises to the cell inner membrane. Its function is as follows. Part of the ABC transporter complex BtuCDF involved in vitamin B12 import. Involved in the translocation of the substrate across the membrane. The chain is Vitamin B12 import system permease protein BtuC from Salmonella arizonae (strain ATCC BAA-731 / CDC346-86 / RSK2980).